Reading from the N-terminus, the 66-residue chain is Large ribosomal subunit protein uL29 (66 aa).

The protein belongs to the universal ribosomal protein uL29 family.

In Thermoplasma volcanium (strain ATCC 51530 / DSM 4299 / JCM 9571 / NBRC 15438 / GSS1), this protein is Large ribosomal subunit protein uL29.